The sequence spans 332 residues: Malate dehydrogenase, cytoplasmic (332 aa).

NAD(+) is bound by residues 16–17 (QI), aspartate 43, and glycine 90. Arginine 99 contributes to the oxaloacetate binding site. Residues glutamine 113 and asparagine 132 each coordinate NAD(+). Residues asparagine 132, arginine 163, histidine 188, and serine 243 each coordinate oxaloacetate. Histidine 188 acts as the Proton acceptor in catalysis.

The protein belongs to the LDH/MDH superfamily. MDH type 2 family. Monomer. As to expression, expressed constitutively in roots.

The protein localises to the cell membrane. The catalysed reaction is (S)-malate + NAD(+) = oxaloacetate + NADH + H(+). Its function is as follows. Malate dehydrogenase; catalyzes a reversible NAD-dependent dehydrogenase reaction involved in central metabolism and redox homeostasis. The polypeptide is Malate dehydrogenase, cytoplasmic (Zea mays (Maize)).